Reading from the N-terminus, the 152-residue chain is MNEQKLCQAINLFVEVLLEGTEFVHREINQDVFKHISREQADLLKILKVKGPTSPGSLAMYQNVHKSAISNRLKKLLEKGLVQWDDCPEKSDRRSKLINITPSGEHILEELDSAIFNALKPLIDDIDEEHLHSIIEIFTILKSKFKGGDSAE.

The region spanning 3 to 143 is the HTH marR-type domain; sequence EQKLCQAINL…IIEIFTILKS (141 aa). The H-T-H motif DNA-binding region spans 55 to 78; sequence PGSLAMYQNVHKSAISNRLKKLLE.

This is an uncharacterized protein from Bacillus subtilis (strain 168).